Reading from the N-terminus, the 185-residue chain is Anterior gradient protein 2 (185 aa).

A signal peptide spans 1 to 18 (MQTGLSLACLVLLCSVLG). Residues 25-45 (PKRQAGATDTNGAAKSEPAPV) are disordered.

Belongs to the AGR family. As to expression, expressed in the anterior of the dorsal ectoderm from late gastrula stages onwards. Becomes restricted to the cement gland anlage at the onset of neurulation (stages 13 to 14) and expressed exclusively in the cement gland from stage 18 onwards, with transient expression in the hatching gland during tailbud stages.

It is found in the secreted. In terms of biological role, involved in cement gland formation; probably specifies dorsal ectoderm to acquire an anterior fate such as cement gland and forebrain. Signals via the FGF pathway. In Xenopus laevis (African clawed frog), this protein is Anterior gradient protein 2 (ag2).